We begin with the raw amino-acid sequence, 525 residues long: GMP synthase [glutamine-hydrolyzing] (525 aa).

The Glutamine amidotransferase type-1 domain maps to 9-207 (RILILDFGSQ…VRDICQCEAL (199 aa)). Catalysis depends on cysteine 86, which acts as the Nucleophile. Catalysis depends on residues histidine 181 and glutamate 183. A GMPS ATP-PPase domain is found at 208–400 (WTPAKIIDDA…LGLPYDMLYR (193 aa)). 235–241 (SGGVDSS) lines the ATP pocket.

Homodimer.

It carries out the reaction XMP + L-glutamine + ATP + H2O = GMP + L-glutamate + AMP + diphosphate + 2 H(+). It participates in purine metabolism; GMP biosynthesis; GMP from XMP (L-Gln route): step 1/1. Functionally, catalyzes the synthesis of GMP from XMP. In Escherichia coli (strain K12 / MC4100 / BW2952), this protein is GMP synthase [glutamine-hydrolyzing].